Consider the following 501-residue polypeptide: Ribose import ATP-binding protein RbsA (501 aa).

ABC transporter domains lie at 6–242 and 253–495; these read LQLS…VGRK and VHGQ…VGKK. 38–45 is a binding site for ATP; the sequence is GENGAGKS.

The protein belongs to the ABC transporter superfamily. Ribose importer (TC 3.A.1.2.1) family. In terms of assembly, the complex is composed of an ATP-binding protein (RbsA), two transmembrane proteins (RbsC) and a solute-binding protein (RbsB).

It localises to the cell inner membrane. The catalysed reaction is D-ribose(out) + ATP + H2O = D-ribose(in) + ADP + phosphate + H(+). Part of the ABC transporter complex RbsABC involved in ribose import. Responsible for energy coupling to the transport system. This chain is Ribose import ATP-binding protein RbsA, found in Vibrio vulnificus (strain CMCP6).